Reading from the N-terminus, the 280-residue chain is MPRDLSRSRSPSPSPSRRRKHSRSPVRQRHSRRSRRDRSPSPYSSHSYSRRKSRSISPRRHRSRSVTPKRRSPTPKRYKRQKSRSSTPSPAKRSPAATLESAKNRNGEKLKREEEERKRRQREAELKLIEEETVKRVEEAIRKKVEESLQSEKIKMEILTLLEEGRKRLNEEVAAQLEEEKEASLIEAKEKEEREQQEKEERERIAEENLKRVEEAQRKEAMERQRKEEERYRELEELQRQKEEAMRRKKAEEEEERLKQMKLLGKNKSRPKLSFALSSK.

Disordered regions lie at residues 1-124 (MPRD…QREA) and 177-280 (LEEE…LSSK). Composition is skewed to basic residues over residues 16–36 (SRRR…RSRR) and 48–83 (YSRR…RQKS). Basic and acidic residues-rich tracts occupy residues 102–124 (AKNR…QREA) and 182–259 (EASL…ERLK).

This is an uncharacterized protein from Arabidopsis thaliana (Mouse-ear cress).